A 529-amino-acid polypeptide reads, in one-letter code: DNA-binding protein (529 aa).

Residues M1–R17 show a composition bias toward basic and acidic residues. Disordered regions lie at residues M1 to S107 and P125 to E166. The span at K129–R139 shows a compositional bias: basic residues. The segment covering E155–S165 has biased composition (acidic residues). Phosphotyrosine; by host is present on Y195. Zn(2+)-binding residues include C284 and H286. The interval I297 to I331 is flexible loop. 6 residues coordinate Zn(2+): C339, C355, C396, C398, C450, and C467. The tract at residues V513–F529 is C-terminal arm, DBP binding.

Belongs to the adenoviridae E2A DNA-binding protein family. As to quaternary structure, homomultimerizes on viral ssDNA bound to pTP. Forms a initiation complex with viral polymerase, pTP and hosts NFIA and POU2F1/OCT1. Interacts with host SRCAP.

The protein resides in the host nucleus. In terms of biological role, plays a role in the elongation phase of viral strand displacement replication by unwinding the template in an ATP-independent fashion, employing its capacity to form multimers. Also enhances the rate of initiation. Released from template upon second strand synthesis. Assembles in complex with viral pTP, viral pol, host NFIA and host POU2F1/OCT1 on viral origin of replication. Covers the whole ssDNA genome during synthesis. The complementary strand synthesis induces its relese from DNA template. May inhibit cellular transcription mediated by the interaction between host SRCAP and CBP. This is DNA-binding protein from Human adenovirus C serotype 5 (HAdV-5).